Here is a 367-residue protein sequence, read N- to C-terminus: Glutamate 5-kinase (367 aa).

Lys10 serves as a coordination point for ATP. Substrate is bound by residues Ser50, Asp137, and Asn149. ATP is bound by residues 169 to 170 and 211 to 217; these read TD and TGGMATK. Residues 275–353 form the PUA domain; it reads AGVIIVDNGA…QEISQILGYE (79 aa).

Belongs to the glutamate 5-kinase family.

Its subcellular location is the cytoplasm. It catalyses the reaction L-glutamate + ATP = L-glutamyl 5-phosphate + ADP. The protein operates within amino-acid biosynthesis; L-proline biosynthesis; L-glutamate 5-semialdehyde from L-glutamate: step 1/2. Its function is as follows. Catalyzes the transfer of a phosphate group to glutamate to form L-glutamate 5-phosphate. The polypeptide is Glutamate 5-kinase (Proteus mirabilis (strain HI4320)).